Consider the following 243-residue polypeptide: Carboxy-S-adenosyl-L-methionine synthase (243 aa).

S-adenosyl-L-methionine contacts are provided by residues tyrosine 40, 65–67 (GSS), 90–91 (DN), 118–119 (DI), asparagine 133, and arginine 200.

It belongs to the class I-like SAM-binding methyltransferase superfamily. Cx-SAM synthase family. Homodimer.

The enzyme catalyses prephenate + S-adenosyl-L-methionine = carboxy-S-adenosyl-L-methionine + 3-phenylpyruvate + H2O. Catalyzes the conversion of S-adenosyl-L-methionine (SAM) to carboxy-S-adenosyl-L-methionine (Cx-SAM). The chain is Carboxy-S-adenosyl-L-methionine synthase from Shewanella denitrificans (strain OS217 / ATCC BAA-1090 / DSM 15013).